A 95-amino-acid chain; its full sequence is MTINKETGTDPDPGYKPTLRSQDKAALKELLHTRLVECGWHKDIKEMIRNIIMERGVDNINRDQLAAQIVPQARALVPEVVKNEMMLRVHAALDK.

This sequence belongs to the ENY2 family. In terms of tissue distribution, expressed specifically in testis.

Its function is as follows. Testis-specific paralog of the ubiquitously expressed transcription and mRNA export factor e(y)2. Cannot functionally replace e(y)2. This Drosophila melanogaster (Fruit fly) protein is Enhancer of yellow 2b transcription factor (e(y)2b).